Reading from the N-terminus, the 101-residue chain is Chaperone modulatory protein CbpM (101 aa).

This sequence belongs to the CbpM family.

Functionally, interacts with CbpA and inhibits both the DnaJ-like co-chaperone activity and the DNA binding activity of CbpA. Together with CbpA, modulates the activity of the DnaK chaperone system. Does not inhibit the co-chaperone activity of DnaJ. This is Chaperone modulatory protein CbpM from Escherichia coli O1:K1 / APEC.